We begin with the raw amino-acid sequence, 274 residues long: Protein TIFY 11A (274 aa).

Disordered stretches follow at residues serine 49–glycine 95 and proline 139–asparagine 176. Residues serine 92–glutamine 127 form the Tify domain. Polar residues predominate over residues proline 139–serine 150. Residues aspartate 161–arginine 185 adopt a coiled-coil conformation. Residues isoleucine 182–glutamine 206 carry the Jas motif. Positions alanine 183–arginine 190 match the Nuclear localization signal motif. Residues glutamine 206–leucine 274 form a disordered region. The span at isoleucine 249–leucine 274 shows a compositional bias: basic and acidic residues.

It belongs to the TIFY/JAZ family. As to quaternary structure, homo- and heterodimer. Interacts with MYC2, MYC3, MYC4, AFPH2/NINJA, TIFY10A/JAZ1, TIFY10B/JAZ2, TIFY11B/JAZ6, TIFY5A/JAZ8 and TIFY3B/JAZ12. (Microbial infection) Interacts with the pathogenic Pseudomonas syringae HopZ1a protein. In terms of processing, (Microbial infection) Acetylated by Pseudomonas syringae HopZ1a. Post-translationally, ubiquitinated. Targeted for degradation by the SCF(COI1) E3 ubiquitin ligase-proteasome pathway during jasmonate signaling.

Its subcellular location is the nucleus. Its function is as follows. Repressor of jasmonate responses. The protein is Protein TIFY 11A of Arabidopsis thaliana (Mouse-ear cress).